The following is a 99-amino-acid chain: UPF0235 protein Neut_2146 (99 aa).

The protein belongs to the UPF0235 family.

The sequence is that of UPF0235 protein Neut_2146 from Nitrosomonas eutropha (strain DSM 101675 / C91 / Nm57).